The primary structure comprises 71 residues: ATP synthase subunit c (71 aa).

2 helical membrane-spanning segments follow: residues 9–29 (MIGYGLAAIGSAIGVGLIFAA) and 49–69 (LLGFALAEALAILGLVFAFVI).

This sequence belongs to the ATPase C chain family. In terms of assembly, F-type ATPases have 2 components, F(1) - the catalytic core - and F(0) - the membrane proton channel. F(1) has five subunits: alpha(3), beta(3), gamma(1), delta(1), epsilon(1). F(0) has three main subunits: a(1), b(2) and c(10-14). The alpha and beta chains form an alternating ring which encloses part of the gamma chain. F(1) is attached to F(0) by a central stalk formed by the gamma and epsilon chains, while a peripheral stalk is formed by the delta and b chains.

The protein localises to the cell membrane. In terms of biological role, f(1)F(0) ATP synthase produces ATP from ADP in the presence of a proton or sodium gradient. F-type ATPases consist of two structural domains, F(1) containing the extramembraneous catalytic core and F(0) containing the membrane proton channel, linked together by a central stalk and a peripheral stalk. During catalysis, ATP synthesis in the catalytic domain of F(1) is coupled via a rotary mechanism of the central stalk subunits to proton translocation. Key component of the F(0) channel; it plays a direct role in translocation across the membrane. A homomeric c-ring of between 10-14 subunits forms the central stalk rotor element with the F(1) delta and epsilon subunits. This is ATP synthase subunit c from Micrococcus luteus (strain ATCC 4698 / DSM 20030 / JCM 1464 / CCM 169 / CCUG 5858 / IAM 1056 / NBRC 3333 / NCIMB 9278 / NCTC 2665 / VKM Ac-2230) (Micrococcus lysodeikticus).